A 67-amino-acid chain; its full sequence is Large ribosomal subunit protein uL29 (67 aa).

Belongs to the universal ribosomal protein uL29 family.

The polypeptide is Large ribosomal subunit protein uL29 (Methanosarcina mazei (strain ATCC BAA-159 / DSM 3647 / Goe1 / Go1 / JCM 11833 / OCM 88) (Methanosarcina frisia)).